We begin with the raw amino-acid sequence, 433 residues long: 5-methylthioadenosine/S-adenosylhomocysteine deaminase (433 aa).

The Zn(2+) site is built by His67 and His69. Substrate is bound by residues Glu96, Arg148, and His186. A Zn(2+)-binding site is contributed by His213. Substrate-binding residues include Glu216 and Asp301. Asp301 lines the Zn(2+) pocket.

Belongs to the metallo-dependent hydrolases superfamily. MTA/SAH deaminase family. It depends on Zn(2+) as a cofactor.

The enzyme catalyses S-adenosyl-L-homocysteine + H2O + H(+) = S-inosyl-L-homocysteine + NH4(+). It catalyses the reaction S-methyl-5'-thioadenosine + H2O + H(+) = S-methyl-5'-thioinosine + NH4(+). Its function is as follows. Catalyzes the deamination of 5-methylthioadenosine and S-adenosyl-L-homocysteine into 5-methylthioinosine and S-inosyl-L-homocysteine, respectively. Is also able to deaminate adenosine. The sequence is that of 5-methylthioadenosine/S-adenosylhomocysteine deaminase from Desulforamulus reducens (strain ATCC BAA-1160 / DSM 100696 / MI-1) (Desulfotomaculum reducens).